The chain runs to 298 residues: Bifunctional protein FolD (298 aa).

NADP(+)-binding positions include 165-167 (GRG), serine 194, and isoleucine 235.

It belongs to the tetrahydrofolate dehydrogenase/cyclohydrolase family. In terms of assembly, homodimer.

It carries out the reaction (6R)-5,10-methylene-5,6,7,8-tetrahydrofolate + NADP(+) = (6R)-5,10-methenyltetrahydrofolate + NADPH. It catalyses the reaction (6R)-5,10-methenyltetrahydrofolate + H2O = (6R)-10-formyltetrahydrofolate + H(+). It functions in the pathway one-carbon metabolism; tetrahydrofolate interconversion. In terms of biological role, catalyzes the oxidation of 5,10-methylenetetrahydrofolate to 5,10-methenyltetrahydrofolate and then the hydrolysis of 5,10-methenyltetrahydrofolate to 10-formyltetrahydrofolate. In Amoebophilus asiaticus (strain 5a2), this protein is Bifunctional protein FolD.